The sequence spans 352 residues: Chorismate synthase (352 aa).

Residues R48 and R54 each contribute to the NADP(+) site. FMN contacts are provided by residues 125-127, 238-239, G278, 293-297, and R319; these read RSS, NA, and KPTSS.

The protein belongs to the chorismate synthase family. Homotetramer. The cofactor is FMNH2.

It carries out the reaction 5-O-(1-carboxyvinyl)-3-phosphoshikimate = chorismate + phosphate. The protein operates within metabolic intermediate biosynthesis; chorismate biosynthesis; chorismate from D-erythrose 4-phosphate and phosphoenolpyruvate: step 7/7. Functionally, catalyzes the anti-1,4-elimination of the C-3 phosphate and the C-6 proR hydrogen from 5-enolpyruvylshikimate-3-phosphate (EPSP) to yield chorismate, which is the branch point compound that serves as the starting substrate for the three terminal pathways of aromatic amino acid biosynthesis. This reaction introduces a second double bond into the aromatic ring system. This is Chorismate synthase from Bordetella petrii (strain ATCC BAA-461 / DSM 12804 / CCUG 43448).